A 337-amino-acid polypeptide reads, in one-letter code: B1 bradykinin receptor (337 aa).

The Extracellular portion of the chain corresponds to 1-41 (MASEVLLELQPSNRSLQAPANITSCESALEDWDLLYRVLPG). N-linked (GlcNAc...) asparagine glycans are attached at residues Asn13 and Asn21. The chain crosses the membrane as a helical span at residues 42–62 (FVITICFFGLLGNLLVLSFFL). The Cytoplasmic portion of the chain corresponds to 63 to 83 (LPWRQWWWQQRQRQQRLTIAE). A helical transmembrane segment spans residues 84–104 (IYLANLAASDLVFVLGLPFWA). Residues 105–121 (ENIGNRFNWPFGTDLCR) lie on the Extracellular side of the membrane. The cysteines at positions 120 and 199 are disulfide-linked. The helical transmembrane segment at 122-142 (VVSGVIKANLFVSIFLVVAIS) threads the bilayer. At 143-164 (QDRYRLLVYPMTSWGYRRRRQA) the chain is on the cytoplasmic side. A helical transmembrane segment spans residues 165–185 (QATCLLIWVAGGLLSIPTFLL). Residues 186-217 (RSVKVVPDLNVSACILLFPHEAWHFARMVELN) are Extracellular-facing. Residue Asn195 is glycosylated (N-linked (GlcNAc...) asparagine). A helical membrane pass occupies residues 218–238 (VLGFLLPVTAIIFFNYHILAS). The Cytoplasmic segment spans residues 239–261 (LRGQKEASRTRCGGPKGSKTTGL). A helical transmembrane segment spans residues 262 to 282 (ILTLVASFLVCWCPYHFFAFL). Topologically, residues 283–305 (DFLVQVRVIQDCSWKEITDLGLQ) are extracellular. A helical membrane pass occupies residues 306–326 (LANFFAFVNSCLNPLIYVFAG). Residues 327–337 (RLLKTRVLGTL) lie on the Cytoplasmic side of the membrane.

Belongs to the G-protein coupled receptor 1 family. Bradykinin receptor subfamily. BDKRB1 sub-subfamily. In terms of tissue distribution, expressed in bladder, lung, duodenum, kidney, uterus, thymus, salivary gland, testis, prostate, macrophages, aorta, spleen and heart.

Its subcellular location is the cell membrane. Its function is as follows. This is a receptor for bradykinin. Could be a factor in chronic pain and inflammation. This Rattus norvegicus (Rat) protein is B1 bradykinin receptor (Bdkrb1).